The following is a 257-amino-acid chain: NH(3)-dependent NAD(+) synthetase (257 aa).

Position 28-35 (28-35 (GISGGVDS)) interacts with ATP. Residue D34 coordinates Mg(2+). R109 provides a ligand contact to deamido-NAD(+). T129 lines the ATP pocket. A Mg(2+)-binding site is contributed by E134. Residues K142 and D149 each contribute to the deamido-NAD(+) site. 2 residues coordinate ATP: K158 and S180. A deamido-NAD(+)-binding site is contributed by 240–241 (HK).

This sequence belongs to the NAD synthetase family. Homodimer.

The enzyme catalyses deamido-NAD(+) + NH4(+) + ATP = AMP + diphosphate + NAD(+) + H(+). The protein operates within cofactor biosynthesis; NAD(+) biosynthesis; NAD(+) from deamido-NAD(+) (ammonia route): step 1/1. In terms of biological role, catalyzes the ATP-dependent amidation of deamido-NAD to form NAD. Uses ammonia as a nitrogen source. The polypeptide is NH(3)-dependent NAD(+) synthetase (Pyrococcus horikoshii (strain ATCC 700860 / DSM 12428 / JCM 9974 / NBRC 100139 / OT-3)).